The chain runs to 201 residues: Troponin I (201 aa).

Alanine 1 is subject to N-acetylalanine. The span at alanine 1–leucine 33 shows a compositional bias: basic and acidic residues. The tract at residues alanine 1 to arginine 45 is disordered. The interval isoleucine 108 to leucine 117 is troponin T-interaction. Residues aspartate 135–valine 148 are actin-binding. N6,N6,N6-trimethyllysine occurs at positions 142 and 146. The disordered stretch occupies residues glutamate 182–glutamate 201.

This sequence belongs to the troponin I family.

In terms of biological role, troponin I is the actomyosin ATPase inhibitory subunit present in the thin filament regulatory complex. The sequence is that of Troponin I from Astacus leptodactylus (Turkish narrow-clawed crayfish).